We begin with the raw amino-acid sequence, 287 residues long: Glycine--tRNA ligase alpha subunit (287 aa).

It belongs to the class-II aminoacyl-tRNA synthetase family. Tetramer of two alpha and two beta subunits.

The protein resides in the cytoplasm. The catalysed reaction is tRNA(Gly) + glycine + ATP = glycyl-tRNA(Gly) + AMP + diphosphate. The protein is Glycine--tRNA ligase alpha subunit of Campylobacter jejuni subsp. jejuni serotype O:6 (strain 81116 / NCTC 11828).